We begin with the raw amino-acid sequence, 156 residues long: MPRKGPAPKRPLVNDPVYGSQLVTQLVNKVLLEGKKSLAERIVYGALEQAREKTGTDPVVTLKRALDNVKPALEVRSRRVGGATYQVPVEVRPDRSTTLALRWLVNFSRQRREKTMVERLANEILDASNGLGASVKRREDTHKMAEANRAFAHYRW.

It belongs to the universal ribosomal protein uS7 family. As to quaternary structure, part of the 30S ribosomal subunit. Contacts proteins S9 and S11.

One of the primary rRNA binding proteins, it binds directly to 16S rRNA where it nucleates assembly of the head domain of the 30S subunit. Is located at the subunit interface close to the decoding center, probably blocks exit of the E-site tRNA. The polypeptide is Small ribosomal subunit protein uS7 (Mycolicibacterium smegmatis (strain ATCC 700084 / mc(2)155) (Mycobacterium smegmatis)).